The sequence spans 480 residues: Glutamate--tRNA ligase (480 aa).

The 'HIGH' region signature appears at 9–19 (PSPTGDPHVGT). The 'KMSKS' region motif lies at 253–257 (KISKR). Lys256 lines the ATP pocket.

Belongs to the class-I aminoacyl-tRNA synthetase family. Glutamate--tRNA ligase type 1 subfamily. Monomer.

Its subcellular location is the cytoplasm. The catalysed reaction is tRNA(Glu) + L-glutamate + ATP = L-glutamyl-tRNA(Glu) + AMP + diphosphate. Functionally, catalyzes the attachment of glutamate to tRNA(Glu) in a two-step reaction: glutamate is first activated by ATP to form Glu-AMP and then transferred to the acceptor end of tRNA(Glu). This Deinococcus geothermalis (strain DSM 11300 / CIP 105573 / AG-3a) protein is Glutamate--tRNA ligase.